The sequence spans 358 residues: Aminomethyltransferase (358 aa).

It belongs to the GcvT family. In terms of assembly, the glycine cleavage system is composed of four proteins: P, T, L and H.

The enzyme catalyses N(6)-[(R)-S(8)-aminomethyldihydrolipoyl]-L-lysyl-[protein] + (6S)-5,6,7,8-tetrahydrofolate = N(6)-[(R)-dihydrolipoyl]-L-lysyl-[protein] + (6R)-5,10-methylene-5,6,7,8-tetrahydrofolate + NH4(+). In terms of biological role, the glycine cleavage system catalyzes the degradation of glycine. In Francisella tularensis subsp. mediasiatica (strain FSC147), this protein is Aminomethyltransferase.